Here is a 346-residue protein sequence, read N- to C-terminus: Tryptophan--tRNA ligase (346 aa).

Residues 10 to 12 (QAS) and 18 to 19 (GN) each bind ATP. A 'HIGH' region motif is present at residues 11–19 (ASGKQHLGN). Residue D140 participates in L-tryptophan binding. ATP contacts are provided by residues 152-154 (GND), I191, and 200-204 (KMSKS). The short motif at 200 to 204 (KMSKS) is the 'KMSKS' region element.

It belongs to the class-I aminoacyl-tRNA synthetase family. Homodimer.

The protein resides in the cytoplasm. The catalysed reaction is tRNA(Trp) + L-tryptophan + ATP = L-tryptophyl-tRNA(Trp) + AMP + diphosphate + H(+). Functionally, catalyzes the attachment of tryptophan to tRNA(Trp). The chain is Tryptophan--tRNA ligase from Mycoplasma pneumoniae (strain ATCC 29342 / M129 / Subtype 1) (Mycoplasmoides pneumoniae).